We begin with the raw amino-acid sequence, 307 residues long: MSKHVAVLMGGLSAEREVSLRSGAACAKALEAEGFRVTTLDVDRDIAQKLAALRPDAALNALHGRYGEDGVIQGVLEMLAIPYTHSGVLASALAMQKDRAKDVLRAAGVPVAEGVTIGRFEAAKAHVMTPPYVVKPLGEGSSFGVIIVRADQTHPPQELTRDDWAYGDLVLVERFVAGRELTCAVIGDKAYGVTEIRAADGGWYDYDAKYKAGGSIHILPANLKEFVYQNVQELALVAHRALGCRGVSRTDFRYDDTPQGTGELVVLEVNSQPGMTETSLVPEIAAYAGISFGELVRWMVEDASCDR.

In terms of domain architecture, ATP-grasp spans Lys-101 to Glu-301. Residue Met-128–Thr-182 participates in ATP binding. Asp-251, Glu-268, and Asn-270 together coordinate Mg(2+).

It belongs to the D-alanine--D-alanine ligase family. It depends on Mg(2+) as a cofactor. Requires Mn(2+) as cofactor.

The protein localises to the cytoplasm. It carries out the reaction 2 D-alanine + ATP = D-alanyl-D-alanine + ADP + phosphate + H(+). Its pathway is cell wall biogenesis; peptidoglycan biosynthesis. Functionally, cell wall formation. The protein is D-alanine--D-alanine ligase of Methylocella silvestris (strain DSM 15510 / CIP 108128 / LMG 27833 / NCIMB 13906 / BL2).